Reading from the N-terminus, the 685-residue chain is Threonine--tRNA ligase (685 aa).

The tract at residues 1–28 (MTSPAPEHSAAPLRVPAGTTAGTAVREA) is disordered. Residues 1–65 (MTSPAPEHSA…EVDVDVEPVA (65 aa)) form the TGS domain. The interval 262 to 568 (DHRKLGTELD…LTEHYAGAFP (307 aa)) is catalytic. Zn(2+) contacts are provided by cysteine 367, histidine 418, and histidine 545.

This sequence belongs to the class-II aminoacyl-tRNA synthetase family. As to quaternary structure, homodimer. The cofactor is Zn(2+).

It localises to the cytoplasm. It catalyses the reaction tRNA(Thr) + L-threonine + ATP = L-threonyl-tRNA(Thr) + AMP + diphosphate + H(+). Catalyzes the attachment of threonine to tRNA(Thr) in a two-step reaction: L-threonine is first activated by ATP to form Thr-AMP and then transferred to the acceptor end of tRNA(Thr). Also edits incorrectly charged L-seryl-tRNA(Thr). The sequence is that of Threonine--tRNA ligase from Rhodococcus erythropolis (strain PR4 / NBRC 100887).